Consider the following 395-residue polypeptide: 8-amino-7-oxononanoate synthase (395 aa).

108–109 is a binding site for pyridoxal 5'-phosphate; the sequence is GF. A substrate-binding site is contributed by His134. Residues Ser184, 209 to 212, and 240 to 243 each bind pyridoxal 5'-phosphate; these read DDAH and TLSK. Lys243 is modified (N6-(pyridoxal phosphate)lysine). Thr357 serves as a coordination point for substrate.

Belongs to the class-II pyridoxal-phosphate-dependent aminotransferase family. BioF subfamily. In terms of assembly, homodimer. It depends on pyridoxal 5'-phosphate as a cofactor.

The enzyme catalyses 6-carboxyhexanoyl-[ACP] + L-alanine + H(+) = (8S)-8-amino-7-oxononanoate + holo-[ACP] + CO2. It functions in the pathway cofactor biosynthesis; biotin biosynthesis. Functionally, catalyzes the decarboxylative condensation of pimeloyl-[acyl-carrier protein] and L-alanine to produce 8-amino-7-oxononanoate (AON), [acyl-carrier protein], and carbon dioxide. The chain is 8-amino-7-oxononanoate synthase from Fervidobacterium nodosum (strain ATCC 35602 / DSM 5306 / Rt17-B1).